The chain runs to 285 residues: Transmembrane protein DDB_G0269096 (285 aa).

2 disordered regions span residues 1–25 (MEDR…MSQS) and 59–87 (SFEN…NNKN). Low complexity-rich tracts occupy residues 12–25 (SDIS…MSQS) and 65–85 (NNNN…NNNN). 5 consecutive transmembrane segments (helical) span residues 124–144 (LEEI…LALI), 152–172 (AQMQ…FGVP), 182–202 (LIMG…ALVY), 205–225 (ANFE…MQFT), and 250–270 (FYFI…TALV).

It localises to the membrane. The chain is Transmembrane protein DDB_G0269096 from Dictyostelium discoideum (Social amoeba).